The following is a 196-amino-acid chain: MNLIPTVIEQTSRGERAYDIYSRLLKDRIIILGSPIDDQVANSIVSQLLFLAAEDPEKDISLYINSPGGSITAGLAIYDTMQFIKPDVSTICIGMAASMGAFLLAAGAKGKRFALPNSEIMIHQPLGGAQGQATEIEIAAKRILFLRDKLNRILAENTGQPVEVIERDTDRDNFMTAQKAQEYGIIDRVLTRIDEK.

The Nucleophile role is filled by S98. Residue H123 is part of the active site.

It belongs to the peptidase S14 family. Fourteen ClpP subunits assemble into 2 heptameric rings which stack back to back to give a disk-like structure with a central cavity, resembling the structure of eukaryotic proteasomes.

The protein resides in the cytoplasm. The enzyme catalyses Hydrolysis of proteins to small peptides in the presence of ATP and magnesium. alpha-casein is the usual test substrate. In the absence of ATP, only oligopeptides shorter than five residues are hydrolyzed (such as succinyl-Leu-Tyr-|-NHMec, and Leu-Tyr-Leu-|-Tyr-Trp, in which cleavage of the -Tyr-|-Leu- and -Tyr-|-Trp bonds also occurs).. Its function is as follows. Cleaves peptides in various proteins in a process that requires ATP hydrolysis. Has a chymotrypsin-like activity. Plays a major role in the degradation of misfolded proteins. The sequence is that of ATP-dependent Clp protease proteolytic subunit from Geobacillus sp. (strain WCH70).